The chain runs to 968 residues: Catenin delta-1 (968 aa).

The residue at position 1 (M1) is an N-acetylmethionine. The segment at M1 to G357 is necessary and sufficient for interaction with CCDC85B. A Phosphoserine modification is found at S4. A coiled-coil region spans residues A10–V46. A Phosphoserine modification is found at S47. Residue T59 is modified to Phosphothreonine. A Phosphotyrosine; by FYN modification is found at Y112. S125 is subject to Phosphoserine. Y217 and Y221 each carry phosphotyrosine. Phosphoserine is present on S225. Y228 carries the phosphotyrosine modification. Phosphoserine occurs at positions 230 and 252. Y257 is modified (phosphotyrosine). A phosphoserine mark is found at S268 and S269. Residue Y280 is modified to Phosphotyrosine. Position 288 is a phosphoserine; by PAK5 (S288). Y291 bears the Phosphotyrosine mark. The Nuclear localization signal (NLS) motif lies at M299–R306. At S300 the chain carries Phosphoserine. T304 is modified (phosphothreonine). A phosphoserine mark is found at S320, S346, S349, and S352. 4 ARM repeats span residues P358–Y395, D398–F437, Q441–T475, and L476–C516. Residue K421 forms a Glycyl lysine isopeptide (Lys-Gly) (interchain with G-Cter in SUMO2) linkage. K517 is covalently cross-linked (Glycyl lysine isopeptide (Lys-Gly) (interchain with G-Cter in SUMO2)). The Nuclear localization signal (NLS) motif lies at I521–T528. ARM repeat units lie at residues L534 to S573, L583 to G624, A653 to A693, R700 to V739, D740 to N780, and T781 to L826. Phosphothreonine is present on residues I566, D572, S587, and E593. The short motif at Q568–L575 is the Nuclear localization signal (NLS) element. Phosphoserine is present on S617. The Nuclear localization signal (NLS) motif lies at K622–F629. S713 is subject to Phosphoserine. Residues E788, K794, and N809 each carry the phosphothreonine modification. At S811 the chain carries Phosphoserine. S815, L835, and K841 each carry phosphothreonine. Phosphoserine is present on S847. The disordered stretch occupies residues N855–L944. A856 carries the post-translational modification Phosphothreonine. Phosphoserine is present on residues S857, S859, and S861. Phosphothreonine is present on S862. A Phosphoserine modification is found at S864. Y865 bears the Phosphotyrosine mark. S868 bears the Phosphoserine mark. T869 carries the phosphothreonine modification. The span at R875 to I888 shows a compositional bias: basic and acidic residues. The residue at position 879 (S879) is a Phosphoserine. K882 is covalently cross-linked (Glycyl lysine isopeptide (Lys-Gly) (interchain with G-Cter in SUMO2)). Q889 and S895 each carry phosphothreonine. A compositionally biased stretch (polar residues) spans Q889–N908. Residue S899 is modified to Phosphoserine. Residue Y904 is modified to Phosphotyrosine. Residues T906, R910, and T916 each carry the phosphothreonine modification. A compositionally biased stretch (basic and acidic residues) spans E909–D922. S920 and S943 each carry phosphoserine.

It belongs to the beta-catenin family. Belongs to a multiprotein cell-cell adhesion complex that also contains E-cadherin/CDH1, alpha-catenin/CTNNA1, beta-catenin/CTNNB1, and gamma-catenin/JUP. Component of a cadherin:catenin adhesion complex composed of at least of CDH26, beta-catenin/CTNNB1, alpha-catenin/CTNNA1 and p120 catenin/CTNND1. Binds to the C-terminal fragment of PSEN1 and mutually competes for CDH1. Interacts with ZBTB33. Interacts with GLIS2. Interacts with FER. Interacts with NANOS1 (via N-terminal region). Interacts (via N-terminus) with GNA12; the interaction regulates CDH1-mediated cell-cell adhesion. Interacts with GNA13. Interacts with CCDC85B. Interacts with PLPP3; negatively regulates the PLPP3-mediated stabilization of CTNNB1. Interacts with DSG3; the interaction facilitates DSG3 localization and retention at cell-cell junctions. Interacts with CTNND1/p120-catenin; the interaction controls CADH5 endocytosis. Post-translationally, phosphorylated by FER and other protein-tyrosine kinases. Phosphorylated at Ser-288 by PAK5. Dephosphorylated by PTPRJ. Expressed in vascular endothelium. Melanocytes and melanoma cells primarily express the long isoform 1A, whereas keratinocytes express shorter isoforms, especially 3A. The shortest isoform 4A, is detected in normal keratinocytes and melanocytes, and generally lost from cells derived from squamous cell carcinomas or melanomas. The C-terminal alternatively spliced exon B is present in the p120ctn transcripts in the colon, intestine and prostate, but lost in several tumor tissues derived from these organs.

The protein localises to the cell junction. It is found in the adherens junction. The protein resides in the cytoplasm. Its subcellular location is the nucleus. It localises to the cell membrane. Functionally, key regulator of cell-cell adhesion that associates with and regulates the cell adhesion properties of both C-, E- and N-cadherins, being critical for their surface stability. Promotes localization and retention of DSG3 at cell-cell junctions, via its interaction with DSG3. Beside cell-cell adhesion, regulates gene transcription through several transcription factors including ZBTB33/Kaiso2 and GLIS2, and the activity of Rho family GTPases and downstream cytoskeletal dynamics. Implicated both in cell transformation by SRC and in ligand-induced receptor signaling through the EGF, PDGF, CSF-1 and ERBB2 receptors. In Homo sapiens (Human), this protein is Catenin delta-1.